Reading from the N-terminus, the 399-residue chain is Nicotinate phosphoribosyltransferase (399 aa).

His224 carries the post-translational modification Phosphohistidine; by autocatalysis.

This sequence belongs to the NAPRTase family. Post-translationally, transiently phosphorylated on a His residue during the reaction cycle. Phosphorylation strongly increases the affinity for substrates and increases the rate of nicotinate D-ribonucleotide production. Dephosphorylation regenerates the low-affinity form of the enzyme, leading to product release.

It carries out the reaction nicotinate + 5-phospho-alpha-D-ribose 1-diphosphate + ATP + H2O = nicotinate beta-D-ribonucleotide + ADP + phosphate + diphosphate. Its pathway is cofactor biosynthesis; NAD(+) biosynthesis; nicotinate D-ribonucleotide from nicotinate: step 1/1. Catalyzes the synthesis of beta-nicotinate D-ribonucleotide from nicotinate and 5-phospho-D-ribose 1-phosphate at the expense of ATP. This chain is Nicotinate phosphoribosyltransferase, found in Ectopseudomonas mendocina (strain ymp) (Pseudomonas mendocina).